The following is a 225-amino-acid chain: Cytidylate kinase (225 aa).

ATP is bound at residue 10 to 18; sequence GPASSGKST.

This sequence belongs to the cytidylate kinase family. Type 1 subfamily.

The protein resides in the cytoplasm. The enzyme catalyses CMP + ATP = CDP + ADP. It carries out the reaction dCMP + ATP = dCDP + ADP. The chain is Cytidylate kinase from Streptococcus gordonii (strain Challis / ATCC 35105 / BCRC 15272 / CH1 / DL1 / V288).